The sequence spans 72 residues: Mitotic-spindle organizing protein 1 (72 aa).

The protein belongs to the MOZART1 family. In terms of assembly, part of the gamma-tubulin complex.

Its subcellular location is the cytoplasm. It localises to the cytoskeleton. The protein localises to the microtubule organizing center. It is found in the centrosome. The protein resides in the spindle. Functionally, required for gamma-tubulin complex recruitment to the centrosome. In Xenopus tropicalis (Western clawed frog), this protein is Mitotic-spindle organizing protein 1 (mzt1).